The following is a 557-amino-acid chain: Venom carboxylesterase-6 (557 aa).

Positions 1–21 are cleaved as a signal peptide; it reads MYMLKLSYILLFLGFVKFSWQ. Residues Cys-88 and Cys-108 are joined by a disulfide bond. Asn-145 carries N-linked (GlcNAc...) asparagine glycosylation. Residue Ser-212 is the Acyl-ester intermediate of the active site. Residues Cys-264 and Cys-275 are joined by a disulfide bond. The active-site Charge relay system is Glu-341. The N-linked (GlcNAc...) asparagine glycan is linked to Asn-374. His-464 functions as the Charge relay system in the catalytic mechanism. N-linked (GlcNAc...) asparagine glycans are attached at residues Asn-478, Asn-528, and Asn-542.

It belongs to the type-B carboxylesterase/lipase family. As to expression, expressed by the venom gland.

It is found in the secreted. It catalyses the reaction a carboxylic ester + H2O = an alcohol + a carboxylate + H(+). The sequence is that of Venom carboxylesterase-6 from Apis mellifera (Honeybee).